A 310-amino-acid chain; its full sequence is Methionyl-tRNA formyltransferase (310 aa).

Position 112–115 (112–115 (SLLP)) interacts with (6S)-5,6,7,8-tetrahydrofolate.

It belongs to the Fmt family.

The catalysed reaction is L-methionyl-tRNA(fMet) + (6R)-10-formyltetrahydrofolate = N-formyl-L-methionyl-tRNA(fMet) + (6S)-5,6,7,8-tetrahydrofolate + H(+). Its function is as follows. Attaches a formyl group to the free amino group of methionyl-tRNA(fMet). The formyl group appears to play a dual role in the initiator identity of N-formylmethionyl-tRNA by promoting its recognition by IF2 and preventing the misappropriation of this tRNA by the elongation apparatus. This Pelagibacter ubique (strain HTCC1062) protein is Methionyl-tRNA formyltransferase.